Consider the following 205-residue polypeptide: Holliday junction branch migration complex subunit RuvA (205 aa).

The tract at residues 1–64 is domain I; that stretch reads MIGKLKGSIE…EDQLKLFGFV (64 aa). The tract at residues 65-143 is domain II; the sequence is SALEREWFNL…AFAGDASASI (79 aa). A flexible linker region spans residues 144 to 153; the sequence is GLKQELGEGV. The tract at residues 153–205 is domain III; the sequence is VASAPVADAVSALTNLGYSRDQAANAVAAALKNGGEGGDSAKLIRLGLKELSR.

Belongs to the RuvA family. Homotetramer. Forms an RuvA(8)-RuvB(12)-Holliday junction (HJ) complex. HJ DNA is sandwiched between 2 RuvA tetramers; dsDNA enters through RuvA and exits via RuvB. An RuvB hexamer assembles on each DNA strand where it exits the tetramer. Each RuvB hexamer is contacted by two RuvA subunits (via domain III) on 2 adjacent RuvB subunits; this complex drives branch migration. In the full resolvosome a probable DNA-RuvA(4)-RuvB(12)-RuvC(2) complex forms which resolves the HJ.

The protein resides in the cytoplasm. The RuvA-RuvB-RuvC complex processes Holliday junction (HJ) DNA during genetic recombination and DNA repair, while the RuvA-RuvB complex plays an important role in the rescue of blocked DNA replication forks via replication fork reversal (RFR). RuvA specifically binds to HJ cruciform DNA, conferring on it an open structure. The RuvB hexamer acts as an ATP-dependent pump, pulling dsDNA into and through the RuvAB complex. HJ branch migration allows RuvC to scan DNA until it finds its consensus sequence, where it cleaves and resolves the cruciform DNA. The chain is Holliday junction branch migration complex subunit RuvA from Agrobacterium fabrum (strain C58 / ATCC 33970) (Agrobacterium tumefaciens (strain C58)).